Consider the following 462-residue polypeptide: GTPase Der (462 aa).

2 EngA-type G domains span residues 9 to 171 (KTIA…GLTK) and 201 to 372 (IQVG…ECFS). GTP contacts are provided by residues 15–22 (GQPNVGKS), 62–66 (DTGGM), 123–126 (NKID), 207–214 (GRVNVGKS), 254–258 (DTAGI), and 318–321 (NKWD). The 85-residue stretch at 373 to 457 (KRIPTSLLNS…PLIINAKDKK (85 aa)) folds into the KH-like domain.

It belongs to the TRAFAC class TrmE-Era-EngA-EngB-Septin-like GTPase superfamily. EngA (Der) GTPase family. Associates with the 50S ribosomal subunit.

Functionally, GTPase that plays an essential role in the late steps of ribosome biogenesis. The chain is GTPase Der from Helicobacter acinonychis (strain Sheeba).